Consider the following 238-residue polypeptide: 1-(5-phosphoribosyl)-5-[(5-phosphoribosylamino)methylideneamino] imidazole-4-carboxamide isomerase (238 aa).

Residue D8 is the Proton acceptor of the active site. Catalysis depends on D127, which acts as the Proton donor.

Belongs to the HisA/HisF family.

Its subcellular location is the cytoplasm. It carries out the reaction 1-(5-phospho-beta-D-ribosyl)-5-[(5-phospho-beta-D-ribosylamino)methylideneamino]imidazole-4-carboxamide = 5-[(5-phospho-1-deoxy-D-ribulos-1-ylimino)methylamino]-1-(5-phospho-beta-D-ribosyl)imidazole-4-carboxamide. It participates in amino-acid biosynthesis; L-histidine biosynthesis; L-histidine from 5-phospho-alpha-D-ribose 1-diphosphate: step 4/9. In Nitratiruptor sp. (strain SB155-2), this protein is 1-(5-phosphoribosyl)-5-[(5-phosphoribosylamino)methylideneamino] imidazole-4-carboxamide isomerase.